We begin with the raw amino-acid sequence, 187 residues long: Ubiquinone biosynthesis protein COQ4 homolog, mitochondrial (187 aa).

Zn(2+) is bound by residues His77, Asp78, His81, and Glu93.

The protein belongs to the COQ4 family. In terms of assembly, component of a multi-subunit COQ enzyme complex. It depends on Zn(2+) as a cofactor.

It is found in the mitochondrion inner membrane. It catalyses the reaction a 4-hydroxy-3-methoxy-5-(all-trans-polyprenyl)benzoate + H(+) = a 2-methoxy-6-(all-trans-polyprenyl)phenol + CO2. It functions in the pathway cofactor biosynthesis; ubiquinone biosynthesis. Lyase that catalyzes the C1-decarboxylation of 4-hydroxy-3-methoxy-5-(all-trans-polyprenyl)benzoic acid into 2-methoxy-6-(all-trans-polyprenyl)phenol during ubiquinone biosynthesis. The sequence is that of Ubiquinone biosynthesis protein COQ4 homolog, mitochondrial from Leishmania braziliensis.